Reading from the N-terminus, the 238-residue chain is MORN repeat-containing protein 3 (238 aa).

MORN repeat units lie at residues 38 to 60, 62 to 84, 91 to 113, 114 to 136, 137 to 159, 160 to 182, and 184 to 205; these read YTGEWLNNLRHGKGTYMWKRRKS, YEGDWKCGERSGFGTYSVQDSNT, YSGYWDNDKKHGYGTHFYSAKEY, YEGEWKCGKRCGWGRMYFANGDI, YEGEWLEDKHSGQGMLCLANENR, YEGSWKDGKKHGPGKFYYLNKGQ, and YEGVWVEDIPKCGTMVDFGRTE.

The protein localises to the cytoplasmic vesicle. It localises to the secretory vesicle. It is found in the acrosome. Functionally, assembles a suppression complex (suppresome) by tethering SIRT1 and MDM2 to regulate composite modifications of p53/TP53. Confers both deacetylation-mediated functional inactivation, by SIRT1, and ubiquitination-dependent degradation, by MDM2, of p53/TP53, promoting a proliferative and cell survival behaviors. May play a role in the regulation of spermatogenesis. The sequence is that of MORN repeat-containing protein 3 (morn3) from Xenopus laevis (African clawed frog).